Consider the following 210-residue polypeptide: Orotate phosphoribosyltransferase (210 aa).

5-phospho-alpha-D-ribose 1-diphosphate is bound by residues arginine 96, lysine 100, histidine 102, and 122-130 (EDLISTGGS). Position 126 (serine 126) interacts with orotate.

This sequence belongs to the purine/pyrimidine phosphoribosyltransferase family. PyrE subfamily. In terms of assembly, homodimer. Requires Mg(2+) as cofactor.

It catalyses the reaction orotidine 5'-phosphate + diphosphate = orotate + 5-phospho-alpha-D-ribose 1-diphosphate. Its pathway is pyrimidine metabolism; UMP biosynthesis via de novo pathway; UMP from orotate: step 1/2. Functionally, catalyzes the transfer of a ribosyl phosphate group from 5-phosphoribose 1-diphosphate to orotate, leading to the formation of orotidine monophosphate (OMP). The polypeptide is Orotate phosphoribosyltransferase (Streptococcus pneumoniae (strain ATCC BAA-255 / R6)).